Consider the following 351-residue polypeptide: Blue-sensitive opsin (351 aa).

Topologically, residues 1–40 (MKQVPEFHEDFYIPIPLDINNLSAYSPFLVPQDHLGNQGI) are extracellular. N-linked (GlcNAc...) asparagine glycosylation occurs at asparagine 21. Residues 41–65 (FMAMSVFMFFIFIGGASINILTILC) form a helical membrane-spanning segment. Topologically, residues 66–77 (TIQFKKLRSHLN) are cytoplasmic. A helical membrane pass occupies residues 78–103 (YILVNLSIANLFVAIFGSPLSFYSFF). Residues 104–117 (NRYFIFGATACKIE) lie on the Extracellular side of the membrane. Residues cysteine 114 and cysteine 191 are joined by a disulfide bond. Residues 118–137 (GFLATLGGMVGLWSLAVVAF) form a helical membrane-spanning segment. Over 138–156 (ERWLVICKPLGNFTFKTPH) the chain is Cytoplasmic. Residues 157–180 (AIAGCILPWISALAASLPPLFGWS) traverse the membrane as a helical segment. The Extracellular segment spans residues 181–206 (RYIPEGLQCSCGPDWYTTNNKYNNES). Residues 207 to 234 (YVMFLFCFCFAVPFGTIVFCYGQLLITL) form a helical membrane-spanning segment. The Cytoplasmic portion of the chain corresponds to 235–256 (KLAAKAQADSASTQKAEREVTK). The chain crosses the membrane as a helical span at residues 257 to 280 (MVVVMVLGFLVCWAPYASFSLWIV). Over 281-288 (SHRGEEFD) the chain is Extracellular. A helical membrane pass occupies residues 289-313 (LRMATIPSCLSKASTVYNPVIYVLM). Lysine 300 is modified (N6-(retinylidene)lysine). Topologically, residues 314 to 351 (NKQFRSCMMKMVCGKNIEEDEASTSSQVTQVSSVAPEK) are cytoplasmic.

Belongs to the G-protein coupled receptor 1 family. Opsin subfamily. Phosphorylated on some or all of the serine and threonine residues present in the C-terminal region. The color pigments are found in the cone photoreceptor cells.

Its subcellular location is the membrane. In terms of biological role, visual pigments are the light-absorbing molecules that mediate vision. They consist of an apoprotein, opsin, covalently linked to cis-retinal. The sequence is that of Blue-sensitive opsin from Carassius auratus (Goldfish).